The sequence spans 321 residues: MSKPIQMERGVKYRDADKMALIPIKTVVTERQELLRKPEWMKIKLPADSSRIQGIKAAMRKNGLHSVCEEASCPNLSECFNHGTATFMILGAICTRRCPFCDVAHGRPVTPDANEPEKLAQTIKDMGLRYVVITSVDRDDLRDGGAQHFADCISAIRAKNPTIKIETLVPDFRGRMDRALDILTVTPPDVFNHNLENVPRVYRQVRPGANYEWSLKLLERFKEAHPDIPTKSGLMVGLGETNAEIVEVMRDLRRHGVTMLTLGQYLQPSRHHLPVQRYVSPAEFDEMKAEAMAMGFTHAACGPFVRSSYHADLQAKGLEVK.

7 residues coordinate [4Fe-4S] cluster: Cys68, Cys73, Cys79, Cys94, Cys98, Cys101, and Ser308. Residues Phe80–Thr297 form the Radical SAM core domain.

Belongs to the radical SAM superfamily. Lipoyl synthase family. [4Fe-4S] cluster serves as cofactor.

Its subcellular location is the cytoplasm. The enzyme catalyses [[Fe-S] cluster scaffold protein carrying a second [4Fe-4S](2+) cluster] + N(6)-octanoyl-L-lysyl-[protein] + 2 oxidized [2Fe-2S]-[ferredoxin] + 2 S-adenosyl-L-methionine + 4 H(+) = [[Fe-S] cluster scaffold protein] + N(6)-[(R)-dihydrolipoyl]-L-lysyl-[protein] + 4 Fe(3+) + 2 hydrogen sulfide + 2 5'-deoxyadenosine + 2 L-methionine + 2 reduced [2Fe-2S]-[ferredoxin]. Its pathway is protein modification; protein lipoylation via endogenous pathway; protein N(6)-(lipoyl)lysine from octanoyl-[acyl-carrier-protein]: step 2/2. Functionally, catalyzes the radical-mediated insertion of two sulfur atoms into the C-6 and C-8 positions of the octanoyl moiety bound to the lipoyl domains of lipoate-dependent enzymes, thereby converting the octanoylated domains into lipoylated derivatives. The protein is Lipoyl synthase of Yersinia enterocolitica serotype O:8 / biotype 1B (strain NCTC 13174 / 8081).